The sequence spans 475 residues: ATP synthase subunit beta (475 aa).

ATP is bound at residue 148–155; it reads GGAGVGKT.

It belongs to the ATPase alpha/beta chains family. As to quaternary structure, F-type ATPases have 2 components, CF(1) - the catalytic core - and CF(0) - the membrane proton channel. CF(1) has five subunits: alpha(3), beta(3), gamma(1), delta(1), epsilon(1). CF(0) has three main subunits: a(1), b(2) and c(9-12). The alpha and beta chains form an alternating ring which encloses part of the gamma chain. CF(1) is attached to CF(0) by a central stalk formed by the gamma and epsilon chains, while a peripheral stalk is formed by the delta and b chains.

The protein resides in the cell inner membrane. The enzyme catalyses ATP + H2O + 4 H(+)(in) = ADP + phosphate + 5 H(+)(out). Produces ATP from ADP in the presence of a proton gradient across the membrane. The catalytic sites are hosted primarily by the beta subunits. The chain is ATP synthase subunit beta from Psychrobacter sp. (strain PRwf-1).